A 50-amino-acid chain; its full sequence is Insulin (50 aa).

3 cysteine pairs are disulfide-bonded: Cys7–Cys36, Cys19–Cys49, and Cys35–Cys40.

Belongs to the insulin family. As to quaternary structure, heterodimer of a B chain and an A chain linked by two disulfide bonds.

It localises to the secreted. Insulin decreases blood glucose concentration. It increases cell permeability to monosaccharides, amino acids and fatty acids. It accelerates glycolysis, the pentose phosphate cycle, and glycogen synthesis in liver. This is Insulin (ins) from Oncorhynchus gorbuscha (Pink salmon).